The chain runs to 429 residues: Enolase (429 aa).

Gln163 provides a ligand contact to (2R)-2-phosphoglycerate. The Proton donor role is filled by Glu205. Mg(2+) contacts are provided by Asp242, Glu287, and Asp314. Positions 339, 368, 369, and 390 each coordinate (2R)-2-phosphoglycerate. Lys339 (proton acceptor) is an active-site residue.

This sequence belongs to the enolase family. The cofactor is Mg(2+).

The protein resides in the cytoplasm. Its subcellular location is the secreted. It is found in the cell surface. It carries out the reaction (2R)-2-phosphoglycerate = phosphoenolpyruvate + H2O. It functions in the pathway carbohydrate degradation; glycolysis; pyruvate from D-glyceraldehyde 3-phosphate: step 4/5. Its function is as follows. Catalyzes the reversible conversion of 2-phosphoglycerate (2-PG) into phosphoenolpyruvate (PEP). It is essential for the degradation of carbohydrates via glycolysis. This is Enolase from Cupriavidus taiwanensis (strain DSM 17343 / BCRC 17206 / CCUG 44338 / CIP 107171 / LMG 19424 / R1) (Ralstonia taiwanensis (strain LMG 19424)).